We begin with the raw amino-acid sequence, 129 residues long: MARKTNTRKRRVKKNIESGIAHIRSTFNNTIVMITDTHGNALAWSSAGSLGFKGSRKSTPFAAQMAAESAAKSAQEHGLKTLEVTVKGPGSGREAAIRALQAAGLEVTAIKDVTPVPHNGCRPPKRRRV.

The protein belongs to the universal ribosomal protein uS11 family. Part of the 30S ribosomal subunit. Interacts with proteins S7 and S18. Binds to IF-3.

Located on the platform of the 30S subunit, it bridges several disparate RNA helices of the 16S rRNA. Forms part of the Shine-Dalgarno cleft in the 70S ribosome. This chain is Small ribosomal subunit protein uS11, found in Listeria innocua serovar 6a (strain ATCC BAA-680 / CLIP 11262).